The sequence spans 267 residues: Glutamate racemase (267 aa).

Residues 9 to 10 (DS) and 41 to 42 (YG) contribute to the substrate site. Catalysis depends on Cys-72, which acts as the Proton donor/acceptor. 73-74 (NT) contributes to the substrate binding site. Cys-184 (proton donor/acceptor) is an active-site residue. A substrate-binding site is contributed by 185–186 (TH).

The protein belongs to the aspartate/glutamate racemases family.

It catalyses the reaction L-glutamate = D-glutamate. It participates in cell wall biogenesis; peptidoglycan biosynthesis. In terms of biological role, provides the (R)-glutamate required for cell wall biosynthesis. This Staphylococcus epidermidis (strain ATCC 12228 / FDA PCI 1200) protein is Glutamate racemase.